Consider the following 358-residue polypeptide: Cytoplasmic tRNA 2-thiolation protein 1 (358 aa).

The protein belongs to the TtcA family. CTU1/NCS6/ATPBD3 subfamily.

It localises to the cytoplasm. It participates in tRNA modification; 5-methoxycarbonylmethyl-2-thiouridine-tRNA biosynthesis. In terms of biological role, plays a central role in 2-thiolation of mcm(5)S(2)U at tRNA wobble positions of tRNA(Lys), tRNA(Glu) and tRNA(Gln). Directly binds tRNAs and probably acts by catalyzing adenylation of tRNAs, an intermediate required for 2-thiolation. It is unclear whether it acts as a sulfurtransferase that transfers sulfur from thiocarboxylated URM1 onto the uridine of tRNAs at wobble position. Prior mcm(5) tRNA modification by the elongator complex is required for 2-thiolation. May also be involved in protein urmylation. This Candida glabrata (strain ATCC 2001 / BCRC 20586 / JCM 3761 / NBRC 0622 / NRRL Y-65 / CBS 138) (Yeast) protein is Cytoplasmic tRNA 2-thiolation protein 1.